We begin with the raw amino-acid sequence, 224 residues long: uncharacterized protein (224 aa).

In terms of domain architecture, ABC transporter spans 2-221 (IEAKNVWKIY…KLRDGEIVEI (220 aa)). Position 38 to 45 (38 to 45 (GPSGCGKS)) interacts with ATP.

It belongs to the ABC transporter superfamily.

This is an uncharacterized protein from Methanocaldococcus jannaschii (strain ATCC 43067 / DSM 2661 / JAL-1 / JCM 10045 / NBRC 100440) (Methanococcus jannaschii).